The sequence spans 314 residues: Methionyl-tRNA formyltransferase (314 aa).

Residue 112–115 coordinates (6S)-5,6,7,8-tetrahydrofolate; the sequence is SLLP.

It belongs to the Fmt family.

It catalyses the reaction L-methionyl-tRNA(fMet) + (6R)-10-formyltetrahydrofolate = N-formyl-L-methionyl-tRNA(fMet) + (6S)-5,6,7,8-tetrahydrofolate + H(+). In terms of biological role, attaches a formyl group to the free amino group of methionyl-tRNA(fMet). The formyl group appears to play a dual role in the initiator identity of N-formylmethionyl-tRNA by promoting its recognition by IF2 and preventing the misappropriation of this tRNA by the elongation apparatus. In Buchnera aphidicola subsp. Schizaphis graminum (strain Sg), this protein is Methionyl-tRNA formyltransferase.